We begin with the raw amino-acid sequence, 1114 residues long: Probable guanine nucleotide exchange factor MCF2L2 (1114 aa).

A CRAL-TRIO domain is found at 11 to 193; that stretch reads PQELTRRLAT…ELGGTLEYRH (183 aa). One copy of the Spectrin repeat lies at 323–428; that stretch reads QHFEHDFCKA…KWDILGKSLE (106 aa). A disordered region spans residues 530 to 614; it reads QTRPVQPVAP…NPELEQQARL (85 aa). A compositionally biased stretch (polar residues) spans 546-559; it reads KWVSSKTSQPSTSV. Residues 577-606 show a composition bias toward basic and acidic residues; it reads LNSRGKEDDETKFEVKSEEIFESHHERGNP. The 204-residue stretch at 619 to 822 folds into the DH domain; that stretch reads PRRRIIRDLL…EDLIKSCELA (204 aa). Positions 834–954 constitute a PH domain; the sequence is DIGKLGKLLL…WFSEISKLLM (121 aa). Over residues 962–975 the composition is skewed to polar residues; sequence DQGNPQFEMSTSKG. The segment at 962 to 1114 is disordered; it reads DQGNPQFEMS…LRPRTSAQES (153 aa). The span at 986–997 shows a compositional bias: basic and acidic residues; sequence NMERATTSKEDP. The segment covering 1017–1028 has biased composition (acidic residues); it reads TFEDCEGAEDME. Composition is skewed to basic and acidic residues over residues 1043-1067 and 1074-1084; these read DDSH…GEKE and TATRSTEEERA.

It belongs to the MCF2 family. In terms of tissue distribution, significantly expressed in brain and modestly in pancreas, brain and testis.

Functionally, probably functions as a guanine nucleotide exchange factor. This chain is Probable guanine nucleotide exchange factor MCF2L2 (MCF2L2), found in Homo sapiens (Human).